The following is a 481-amino-acid chain: Tripartite motif-containing protein 10 (481 aa).

Residues 16–61 (CPICQGTLREPVTIDCGHNFCRACLTRYCEIPGPDLEESPTCPLCK) form an RING-type zinc finger. Residues 94–135 (GEEDVCQEHGEKIYFFCEDDEMQLCVVCREAGEHATHTMRFL) form a B box-type zinc finger. Cys-99, His-102, Cys-121, and His-127 together coordinate Zn(2+). The stretch at 150-177 (LKCLRKEREEIQEIQSRENKRMQVLLTQ) forms a coiled coil. One can recognise a B30.2/SPRY domain in the interval 292 to 481 (REMKMFLEKL…GRGSSFSLSS (190 aa)).

It belongs to the TRIM/RBCC family. In terms of assembly, interacts with IFNAR1; this interaction prevents association of IFNAR1 with TYK2.

It is found in the cytoplasm. Functionally, E3 ligase that plays an essential role in the differentiation and survival of terminal erythroid cells. May directly bind to PTEN and promote its ubiquitination, resulting in its proteasomal degradation and activation of hypertrophic signaling. In addition, plays a role in immune response regulation by repressing the phosphorylation of STAT1 and STAT2 in the interferon/JAK/STAT signaling pathway independent of its E3 ligase activity. Mechanistically, interacts with the intracellular domain of IFNAR1 and thereby inhibits the association between TYK2 and IFNAR1. The sequence is that of Tripartite motif-containing protein 10 (TRIM10) from Homo sapiens (Human).